Here is a 4239-residue protein sequence, read N- to C-terminus: Tenellin synthetase (4239 aa).

One can recognise a Ketosynthase family 3 (KS3) domain in the interval 15 to 454 (SEPIAIIGSA…GTNAHAIIER (440 aa)). Residues cysteine 189, histidine 326, and histidine 374 each act as for beta-ketoacyl synthase activity in the active site. Residues 589–923 (VFTGQGAQWP…ANDAVAFSTA (335 aa)) form a malonyl-CoA:ACP transacylase (MAT) domain region. The N-terminal hotdog fold stretch occupies residues 993–1135 (HELLGRRTPD…GRIAVQLGAK (143 aa)). Positions 993–1310 (HELLGRRTPD…GFEVRAVGEP (318 aa)) are dehydratase (DH) domain. Residues 993 to 1313 (HELLGRRTPD…VRAVGEPDAS (321 aa)) enclose the PKS/mFAS DH domain. Histidine 1025 (proton acceptor; for dehydratase activity) is an active-site residue. Residues 1158–1313 (LQQLDCEKLY…VRAVGEPDAS (156 aa)) form a C-terminal hotdog fold region. The Proton donor; for dehydratase activity role is filled by aspartate 1217. Positions 1459-1652 (RLYTEDKGMH…FSGVDHIVHD (194 aa)) are methyltransferase (MT) domain. A ketoreductase (KR) domain region spans residues 2209 to 2382 (TYLMVGAAGG…AASIIHVGHV (174 aa)). Residues 2502-2582 (EAAVAALKGF…QLSALAAKLA (81 aa)) enclose the Carrier 1 domain. At serine 2542 the chain carries O-(pantetheine 4'-phosphoryl)serine. 2 disordered regions span residues 2587 to 2629 (KKRA…EIAQ) and 2642 to 2712 (LEAS…FFTQ). 2 stretches are compositionally biased toward polar residues: residues 2648 to 2662 (GGSS…SSVS) and 2670 to 2681 (ESTLQSSDNNGE). A compositionally biased stretch (low complexity) spans 2682–2698 (STPSKSSNCNSDSGSDN). Positions 2723–3169 (REAPMSPAQS…SAQSVGDCVV (447 aa)) are condensation (C) domain. The tract at residues 3203-3614 (CQQHSTKSAI…DGTLLCFGRI (412 aa)) is adenylation (A) (KR) domain. The interval 3728-3752 (EAAAATSPSNNNINNNTPSGGGGEK) is disordered. Low complexity predominate over residues 3729 to 3745 (AAAATSPSNNNINNNTP). The region spanning 3751–3835 (EKMTVRQGEL…GMARCVAEQR (85 aa)) is the Carrier 2 domain. Serine 3795 carries the O-(pantetheine 4'-phosphoryl)serine modification. The interval 3862–3892 (EKLQHSSASSSSSSSSSSSAGSSSTQRPRKT) is disordered. The span at 3867–3885 (SSASSSSSSSSSSSAGSSS) shows a compositional bias: low complexity. Positions 3899–4145 (LTGATGFLGG…LDFGQVDKVV (247 aa)) are reductase (RED) domain.

The protein in the C-terminal section; belongs to the NRP synthetase family.

It participates in secondary metabolite biosynthesis. Functionally, hybrid PKS-NRPS synthetase; part of the gene cluster that mediates the biosynthesis of tenellin-type 2-pyridones, iron-chelating compounds involved in iron stress tolerance, competition with the natural competitor fungus Metarhizium robertsii and insect hosts infection. TenS catalyzes the assembly of the polyketide-amino acid backbone. Because tenS lacks a designated enoylreductase (ER) domain, the required activity is provided the enoyl reductase tenC. Upon formation of the polyketide backbone on the thiotemplate, the triketide is transferred to the NRPS module and linked to tyrosine to produce the pyrrolidine-2-dione intermediates, including pretellinin A, 11-hydropretellenin A, 12-hydropretellenin A, 13-hydropretellenin A, 14-hydropretellenin A, 12-oxopretellenin A and prototellinin D. The pathway begins with the assembly of the polyketide-amino acid backbone by the hybrid PKS-NRPS tenS with the help of the enoyl reductase tenC. These enzymes catalyze the synthesis of the pyrrolidine-2-dione intermediates pretellinin A, 11-hydropretellenin A, 12-hydropretellenin A, 13-hydropretellenin A, 14-hydropretellenin A, 12-oxopretellenin A and prototellinin D. The cytochrome P450 monooxygenase tenA then catalyzes an oxidative ring expansion of pretenellin A and 14-hydropretellenin A to form the 2-pyridone core, leading to pretenellin B and pyridovericin, respectively. The cytochrome P450 monooxygenase tenB is then required for the selective N-hydroxylation of the 2-pyridone nitrogen of yield tellinin and 15-hydroxytellenin (15-HT), respectively. The UDP-glucosyltransferase GT1 and the methyltransferase MT1, located outside the tenS gene cluster, contribute to the stepwise glycosylation and methylation of 15-HT to obtain the glycoside pyridovericin-N-O-(4-O-methyl-beta-D-glucopyranoside) (PMGP). Additional related compounds such as 1-O-methyl-15-HT, (8Z)-1-O-methyl-15-HT, and O-methyltenellin A are also produced but the enzymes involved in their biosynthesis have still to be determined. The sequence is that of Tenellin synthetase from Beauveria bassiana (White muscardine disease fungus).